The primary structure comprises 173 residues: Co-chaperone protein HscB (173 aa).

The 73-residue stretch at 2 to 74 (DYFTLFGLPV…LKRAEYMLSL (73 aa)) folds into the J domain.

The protein belongs to the HscB family. In terms of assembly, interacts with HscA and stimulates its ATPase activity. Interacts with IscU.

Functionally, co-chaperone involved in the maturation of iron-sulfur cluster-containing proteins. Seems to help targeting proteins to be folded toward HscA. The sequence is that of Co-chaperone protein HscB from Serratia proteamaculans (strain 568).